The sequence spans 490 residues: GTPase Der (490 aa).

2 consecutive EngA-type G domains span residues 3 to 166 (PVIA…PKDE) and 196 to 369 (IKIA…KSAV). Residues 9–16 (GRPNVGKS), 56–60 (DTGGI), 118–121 (NKID), 202–209 (GRPNVGKS), 249–253 (DTAGV), and 314–317 (NKWD) contribute to the GTP site. In terms of domain architecture, KH-like spans 370–454 (TRWPTSRLTQ…PIRIEFKGGE (85 aa)). The disordered stretch occupies residues 452-490 (GGENPYEGNKNTLTDRQVNKKRRMMSHHKKADKKRRDKR). A compositionally biased stretch (basic residues) spans 470–490 (NKKRRMMSHHKKADKKRRDKR).

The protein belongs to the TRAFAC class TrmE-Era-EngA-EngB-Septin-like GTPase superfamily. EngA (Der) GTPase family. In terms of assembly, associates with the 50S ribosomal subunit.

Functionally, GTPase that plays an essential role in the late steps of ribosome biogenesis. The chain is GTPase Der from Pseudomonas savastanoi pv. phaseolicola (strain 1448A / Race 6) (Pseudomonas syringae pv. phaseolicola (strain 1448A / Race 6)).